A 517-amino-acid chain; its full sequence is Glycerol kinase 5 (517 aa).

ATP is bound by residues S23 and T24. Positions 93, 270, and 271 each coordinate glycerol. Residues T292, G335, and G432 each coordinate ATP.

This sequence belongs to the FGGY kinase family.

It is found in the cytoplasm. The enzyme catalyses glycerol + ATP = sn-glycerol 3-phosphate + ADP + H(+). It functions in the pathway polyol metabolism; glycerol degradation via glycerol kinase pathway; sn-glycerol 3-phosphate from glycerol: step 1/1. In terms of biological role, skin-specific kinase that plays a key role in glycerol metabolism, catalyzing its phosphorylation to produce sn-glycerol 3-phosphate. Involved in skin-specific regulation of sterol regulatory element-binding protein (SREBP) processing and lipid biosynthesis. In Gallus gallus (Chicken), this protein is Glycerol kinase 5 (GK5).